A 153-amino-acid polypeptide reads, in one-letter code: Transcription antitermination protein NusB (153 aa).

It belongs to the NusB family.

Functionally, involved in transcription antitermination. Required for transcription of ribosomal RNA (rRNA) genes. Binds specifically to the boxA antiterminator sequence of the ribosomal RNA (rrn) operons. The polypeptide is Transcription antitermination protein NusB (Clostridium tetani (strain Massachusetts / E88)).